The sequence spans 505 residues: Maturase K (505 aa).

The protein belongs to the intron maturase 2 family. MatK subfamily.

It is found in the plastid. Its subcellular location is the chloroplast. Its function is as follows. Usually encoded in the trnK tRNA gene intron. Probably assists in splicing its own and other chloroplast group II introns. The polypeptide is Maturase K (Morus indica (Mulberry)).